The sequence spans 313 residues: L-lactate dehydrogenase (313 aa).

NAD(+) contacts are provided by residues Val-11, Asp-32, Arg-37, Tyr-62, and 76–77; that span reads GV. Residues Gln-79, Arg-85, and 117–120 contribute to the substrate site; that span reads NPVD. Residues 115 to 117 and Ser-143 each bind NAD(+); that span reads ASN. 148-151 provides a ligand contact to substrate; sequence DTAR. Beta-D-fructose 1,6-bisphosphate-binding residues include Arg-153 and His-168. His-175 functions as the Proton acceptor in the catalytic mechanism. Position 221 is a phosphotyrosine (Tyr-221). Thr-230 is a binding site for substrate.

This sequence belongs to the LDH/MDH superfamily. LDH family. As to quaternary structure, homotetramer.

Its subcellular location is the cytoplasm. The catalysed reaction is (S)-lactate + NAD(+) = pyruvate + NADH + H(+). It participates in fermentation; pyruvate fermentation to lactate; (S)-lactate from pyruvate: step 1/1. Its activity is regulated as follows. Allosterically activated by fructose 1,6-bisphosphate (FBP). Catalyzes the conversion of lactate to pyruvate. The protein is L-lactate dehydrogenase of Geotalea daltonii (strain DSM 22248 / JCM 15807 / FRC-32) (Geobacter daltonii).